Consider the following 422-residue polypeptide: MGASGRWIKALVGFTKSDKSRSSKKDENVKVATKSRFGRKNSVDFDFEKFQDGFEDSNTRSMVDTGVSTSTSLQSYGGVAYDEQSRENRAATRIQTAYRGFLARRALRALKGLVRLQALVRGHAVRKQAAVTLRCMQALVRVQARVRARRVRLALELESETSQQTLQQQLADEARVREIEEGWCDSIGSVEQIQAKLLKRQEAAAKRERAMAYALTHQWQAGTRLLSAHSGFQPDKNNWGWNWLERWMAVRPWENRFLDSNLRDDAKLGENGMEQSENVPKTQIKSVSKMPNTSNLVSGVSSQMTGPCQSDGDSSSPGISSSIPVVSKAKSKPAKDDLAVEVNSRPGAGPRSHSNPKERSREPNRSSKERLSLPNSGKSLGSQSTKANRAGKLTPASQKVVEEKSAQNQRRRNSDPIKQRLA.

Positions 23–30 match the Nuclear localization signal motif; sequence SKKDENVK. 3 consecutive IQ domains span residues 87–115, 116–138, and 139–164; these read ENRA…GLVR, LQAL…CMQA, and LVRV…TSQQ. The tract at residues 137–151 is calmodulin-binding; sequence QALVRVQARVRARRV. The tract at residues 269–422 is disordered; it reads GENGMEQSEN…NSDPIKQRLA (154 aa). A compositionally biased stretch (polar residues) spans 273–308; that stretch reads MEQSENVPKTQIKSVSKMPNTSNLVSGVSSQMTGPC. A compositionally biased stretch (low complexity) spans 310–327; it reads SDGDSSSPGISSSIPVVS. The span at 355-371 shows a compositional bias: basic and acidic residues; that stretch reads NPKERSREPNRSSKERL. Polar residues predominate over residues 373–387; that stretch reads LPNSGKSLGSQSTKA. The span at 412-422 shows a compositional bias: basic and acidic residues; the sequence is RNSDPIKQRLA.

Belongs to the IQD family. Binds to multiple calmodulin (CaM) in the presence of Ca(2+) and CaM-like proteins. As to expression, expressed mostly in vegetative tissues including older parts of the root, cotyledons, leaves and shoot apical meristems (SAM). Present at low levels in pollen, siliques and seeds.

The protein localises to the nucleus. Its subcellular location is the cytoplasm. It localises to the cytoskeleton. It is found in the spindle. The protein resides in the phragmoplast. May be involved in cooperative interactions with calmodulins or calmodulin-like proteins. Recruits calmodulin (CaM) calcium sensor proteins to cortical microtubule arrays, thus being a potential scaffold in cellular signaling and trafficking. Binds to microtubules (MTs) and promotes MT assembly and dynamics to modulate pavement cell (PC) morphogenesis via cellulose deposition-dependent anisotropic cell expansion triggered by cellulose synthase complexes (CSCs). May associate with nucleic acids and regulate gene expression at the transcriptional or post-transcriptional level. This chain is Protein IQ-DOMAIN 5, found in Arabidopsis thaliana (Mouse-ear cress).